The chain runs to 307 residues: UDP-N-acetylenolpyruvoylglucosamine reductase (307 aa).

One can recognise an FAD-binding PCMH-type domain in the interval 33–197; the sequence is TGGNADFYIT…LEAAFTLAPG (165 aa). Arg-176 is a catalytic residue. Residue Ser-226 is the Proton donor of the active site. Glu-296 is a catalytic residue.

The protein belongs to the MurB family. FAD is required as a cofactor.

The protein localises to the cytoplasm. It catalyses the reaction UDP-N-acetyl-alpha-D-muramate + NADP(+) = UDP-N-acetyl-3-O-(1-carboxyvinyl)-alpha-D-glucosamine + NADPH + H(+). Its pathway is cell wall biogenesis; peptidoglycan biosynthesis. Functionally, cell wall formation. The protein is UDP-N-acetylenolpyruvoylglucosamine reductase of Staphylococcus aureus (strain Mu3 / ATCC 700698).